We begin with the raw amino-acid sequence, 211 residues long: Nucleoside triphosphate pyrophosphatase (211 aa).

Asp-75 serves as the catalytic Proton acceptor.

The protein belongs to the Maf family. A divalent metal cation serves as cofactor.

It is found in the cytoplasm. The catalysed reaction is a ribonucleoside 5'-triphosphate + H2O = a ribonucleoside 5'-phosphate + diphosphate + H(+). The enzyme catalyses a 2'-deoxyribonucleoside 5'-triphosphate + H2O = a 2'-deoxyribonucleoside 5'-phosphate + diphosphate + H(+). In terms of biological role, nucleoside triphosphate pyrophosphatase. May have a dual role in cell division arrest and in preventing the incorporation of modified nucleotides into cellular nucleic acids. In Prochlorococcus marinus (strain NATL1A), this protein is Nucleoside triphosphate pyrophosphatase.